The following is a 196-amino-acid chain: DnaA initiator-associating protein DiaA (196 aa).

The 163-residue stretch at 34-196 (LVQSLLNGNK…DNTLFPHQDD (163 aa)) folds into the SIS domain.

This sequence belongs to the SIS family. DiaA subfamily. As to quaternary structure, homotetramer; dimer of dimers.

Its function is as follows. Required for the timely initiation of chromosomal replication via direct interactions with the DnaA initiator protein. The sequence is that of DnaA initiator-associating protein DiaA from Enterobacter sp. (strain 638).